Consider the following 1265-residue polypeptide: DNA-directed RNA polymerase subunit beta'' (1265 aa).

Positions 223, 297, 304, and 307 each coordinate Zn(2+).

It belongs to the RNA polymerase beta' chain family. RpoC2 subfamily. As to quaternary structure, in plastids the minimal PEP RNA polymerase catalytic core is composed of four subunits: alpha, beta, beta', and beta''. When a (nuclear-encoded) sigma factor is associated with the core the holoenzyme is formed, which can initiate transcription. Zn(2+) is required as a cofactor.

It is found in the plastid. It localises to the cyanelle. It catalyses the reaction RNA(n) + a ribonucleoside 5'-triphosphate = RNA(n+1) + diphosphate. Functionally, DNA-dependent RNA polymerase catalyzes the transcription of DNA into RNA using the four ribonucleoside triphosphates as substrates. The chain is DNA-directed RNA polymerase subunit beta'' from Cyanophora paradoxa.